We begin with the raw amino-acid sequence, 156 residues long: Transcription factor MafF (156 aa).

The segment at Arg51 to Lys76 is basic motif. The bZIP domain maps to Arg51–Leu114. The segment at Leu79–Leu93 is leucine-zipper.

Belongs to the bZIP family. Maf subfamily. In terms of assembly, monomer and homo- or heterodimer. Interacts with MIP. Forms high affinity heterodimers with members of the CNC-bZIP family such as NFE2L1/NRF1. Highly expressed in the lung, lower expression in the brain, thymus, liver, spleen, intestine, kidney, heart, muscle, and ovary. Not significantly expressed in hematopoietic cells.

It is found in the nucleus. In terms of biological role, since they lack a putative transactivation domain, the small Mafs behave as transcriptional repressors when they dimerize among themselves. However, they seem to serve as transcriptional activators by dimerizing with other (usually larger) basic-zipper proteins, such as NFE2L1/NRF1, and recruiting them to specific DNA-binding sites. Interacts with the upstream promoter region of the oxytocin receptor gene. May be a transcriptional enhancer in the up-regulation of the oxytocin receptor gene at parturition. The sequence is that of Transcription factor MafF (Maff) from Mus musculus (Mouse).